The following is a 302-amino-acid chain: Tyrosine--tRNA ligase 2 (302 aa).

Residue Y33 coordinates L-tyrosine. Positions 38 to 47 match the 'HIGH' region motif; the sequence is PTADSLHLGH. L-tyrosine-binding residues include Y160 and Q164. The 'KMSKS' region signature appears at 220–224; the sequence is KFGKS. K223 serves as a coordination point for ATP.

The protein belongs to the class-I aminoacyl-tRNA synthetase family. TyrS type 1 subfamily. Homodimer.

The protein localises to the cytoplasm. The enzyme catalyses tRNA(Tyr) + L-tyrosine + ATP = L-tyrosyl-tRNA(Tyr) + AMP + diphosphate + H(+). Catalyzes the attachment of tyrosine to tRNA(Tyr) in a two-step reaction: tyrosine is first activated by ATP to form Tyr-AMP and then transferred to the acceptor end of tRNA(Tyr). In Streptococcus thermophilus (strain CNRZ 1066), this protein is Tyrosine--tRNA ligase 2 (tyrS2).